A 515-amino-acid chain; its full sequence is MTKRVLISVSDKAGIVEFAQELKKLGWEIISTGGTKVALDNAGVDTIAIDDVTGFPEMMDGRVKTLHPNIHGGLLARRDLDSHLEAAKDNKIELIDLVVVNLYPFKETILKPDVTYADAVENIDIGGPSMLRSAAKNHASVTVVVDPADYAVVLDELAANGETSYETRQRLAAKVFRHTAAYDALIAEYFTAQVGESKPEKLTLTYDLKQPMRYGENPQQDADFYQKALPTDYSIASAKQLNGKELSFNNIRDADAAIRIIRDFKDSPTVVALKHMNPCGIGQADDIETAWDYAYESDPVSIFGGIVVLNREVDAATAEKMHGVFLEIIIAPSYTDEALAILINKKKNLRILALPFNAQEASEVEAEYTGVVGGLLVQNQDVVKESPADWQVVTKRQPTETEATALEFAWKAIKYVKSNGIIVTNDHMTLGVGPGQTNRVASVRLAIDQAKDRLDGAVLASDAFFPFADNVEEIAKAGIKAIIQPGGSVRDQESIEAADKYGLTMVFTGVRHFRH.

The MGS-like domain maps to 1-145 (MTKRVLISVS…KNHASVTVVV (145 aa)).

It belongs to the PurH family.

The enzyme catalyses (6R)-10-formyltetrahydrofolate + 5-amino-1-(5-phospho-beta-D-ribosyl)imidazole-4-carboxamide = 5-formamido-1-(5-phospho-D-ribosyl)imidazole-4-carboxamide + (6S)-5,6,7,8-tetrahydrofolate. The catalysed reaction is IMP + H2O = 5-formamido-1-(5-phospho-D-ribosyl)imidazole-4-carboxamide. It functions in the pathway purine metabolism; IMP biosynthesis via de novo pathway; 5-formamido-1-(5-phospho-D-ribosyl)imidazole-4-carboxamide from 5-amino-1-(5-phospho-D-ribosyl)imidazole-4-carboxamide (10-formyl THF route): step 1/1. It participates in purine metabolism; IMP biosynthesis via de novo pathway; IMP from 5-formamido-1-(5-phospho-D-ribosyl)imidazole-4-carboxamide: step 1/1. In Streptococcus pneumoniae (strain Taiwan19F-14), this protein is Bifunctional purine biosynthesis protein PurH.